The following is a 114-amino-acid chain: Ig kappa chain V-I region S107A (114 aa).

A framework-1 region spans residues D1–C23. C23 and C94 are disulfide-bonded. The complementarity-determining-1 stretch occupies residues T24–A40. The interval W41 to Y55 is framework-2. Residues G56–I62 are complementarity-determining-2. The framework-3 stretch occupies residues G63–C94. Positions A95–T103 are complementarity-determining-3. A framework-4 region spans residues F104 to K113.

Functionally, anti-phosphocholine antibody. The chain is Ig kappa chain V-I region S107A (Igkv7-33) from Mus musculus (Mouse).